Reading from the N-terminus, the 526-residue chain is MTNMELAAKVIQELVHTGVREFILCAGARNSPMVHILDECKNLKVYSFFEERAAGFFALGRIASTRRPVAVITTSGTAVAELLPAAVEGTYSSLPLIMVTADRPKHYRGSGAPQTIEQVGIFSYYNEVALDLDSENSHLSFKSLSWKKPIHVNVSFEEPLIDGPVPQIHIPSVSERTKLPVQIPLGTLKEMETFVNTHKPLVMVGILPEKAYGTVLDFLKQYKAPVYCEGISSLRGHPDLKDVEIRSGEKMIHRVLEMGVCDSILRIGGIPTARVWRDLEDKYKELPVFSVSFNHFTGLSRPVQHCNSLDLLSQVEFSYPHHENVKVNIEDAARATQIRQLLDKYPDSEQGMIYAISKRMKGSSVYLGNSLPIREWDSSSSHDFPPARVAANRGANGIDGQISTFLGWAHPELENWCLVGDLTALYDLSSLWVTSQLDAKKFRVVVINNGGGQIFHRMFKKEIFINKHQISFESWAKMWNWSYDKWHTIPEDNKELNLADHQIIELSPNWEHTQEFWKEYDLLWKE.

It belongs to the TPP enzyme family. MenD subfamily. In terms of assembly, homodimer. The cofactor is Mg(2+). Requires Mn(2+) as cofactor. It depends on thiamine diphosphate as a cofactor.

The catalysed reaction is isochorismate + 2-oxoglutarate + H(+) = 5-enolpyruvoyl-6-hydroxy-2-succinyl-cyclohex-3-ene-1-carboxylate + CO2. The protein operates within quinol/quinone metabolism; 1,4-dihydroxy-2-naphthoate biosynthesis; 1,4-dihydroxy-2-naphthoate from chorismate: step 2/7. Its pathway is quinol/quinone metabolism; menaquinone biosynthesis. Functionally, catalyzes the thiamine diphosphate-dependent decarboxylation of 2-oxoglutarate and the subsequent addition of the resulting succinic semialdehyde-thiamine pyrophosphate anion to isochorismate to yield 2-succinyl-5-enolpyruvyl-6-hydroxy-3-cyclohexene-1-carboxylate (SEPHCHC). The polypeptide is 2-succinyl-5-enolpyruvyl-6-hydroxy-3-cyclohexene-1-carboxylate synthase (Bdellovibrio bacteriovorus (strain ATCC 15356 / DSM 50701 / NCIMB 9529 / HD100)).